The primary structure comprises 134 residues: Putative pre-16S rRNA nuclease (134 aa).

It belongs to the YqgF nuclease family.

It is found in the cytoplasm. Could be a nuclease involved in processing of the 5'-end of pre-16S rRNA. This is Putative pre-16S rRNA nuclease from Helicobacter pylori (strain HPAG1).